We begin with the raw amino-acid sequence, 79 residues long: Acyl carrier protein (79 aa).

One can recognise a Carrier domain in the interval 2-77 (DNIEQRVKKI…LAIDFAKSKA (76 aa)). An O-(pantetheine 4'-phosphoryl)serine modification is found at Ser-37.

The protein belongs to the acyl carrier protein (ACP) family. 4'-phosphopantetheine is transferred from CoA to a specific serine of apo-ACP by AcpS. This modification is essential for activity because fatty acids are bound in thioester linkage to the sulfhydryl of the prosthetic group.

Its subcellular location is the cytoplasm. The protein operates within lipid metabolism; fatty acid biosynthesis. Functionally, carrier of the growing fatty acid chain in fatty acid biosynthesis. In Polynucleobacter necessarius subsp. necessarius (strain STIR1), this protein is Acyl carrier protein.